The following is a 795-amino-acid chain: Probable diacylglycerol kinase 3 (795 aa).

2 consecutive EF-hand domains span residues 170 to 205 (TPEN…MMNV) and 215 to 250 (ELEQ…NIPL). 8 residues coordinate Ca(2+): aspartate 183, aspartate 185, asparagine 187, glutamate 194, aspartate 228, aspartate 230, aspartate 232, and glutamate 239. 2 Phorbol-ester/DAG-type zinc fingers span residues 265–316 (SHVW…ATNC) and 329–375 (YHHW…AQEC). The DAGKc domain occupies 423-558 (NDCRPLLVLV…MDRWQIKIEI (136 aa)).

It belongs to the eukaryotic diacylglycerol kinase family. Monomer.

It catalyses the reaction a 1,2-diacyl-sn-glycerol + ATP = a 1,2-diacyl-sn-glycero-3-phosphate + ADP + H(+). Involved in AFD-neuron mediated thermotaxis. Regulates behavior to environmental temperature. Thought to have a role in olfactory adaptation by affecting diacylglycerol levels. This is Probable diacylglycerol kinase 3 (dgk-3) from Caenorhabditis elegans.